Here is a 190-residue protein sequence, read N- to C-terminus: Transcription antitermination protein NusB (190 aa).

The segment at Ala158 to Arg190 is disordered.

Belongs to the NusB family.

Involved in transcription antitermination. Required for transcription of ribosomal RNA (rRNA) genes. Binds specifically to the boxA antiterminator sequence of the ribosomal RNA (rrn) operons. This is Transcription antitermination protein NusB from Mycobacterium leprae (strain TN).